A 182-amino-acid polypeptide reads, in one-letter code: UPF0148 protein VNG_2366C (182 aa).

A disordered region spans residues 1 to 162 (MSNTDDGFDK…RASDADDPRT (162 aa)). Basic and acidic residues-rich tracts occupy residues 7-33 (GFDK…ETAR) and 47-62 (DHCD…HDGE). Over residues 105–122 (PDTSSSTAAATDDVPTAA) the composition is skewed to low complexity. Over residues 153-162 (RASDADDPRT) the composition is skewed to basic and acidic residues.

Belongs to the UPF0148 family.

This Halobacterium salinarum (strain ATCC 700922 / JCM 11081 / NRC-1) (Halobacterium halobium) protein is UPF0148 protein VNG_2366C.